Reading from the N-terminus, the 181-residue chain is Putative ankyrin repeat protein RF_0782 (181 aa).

ANK repeat units follow at residues 24 to 53 and 54 to 83; these read YHYS…DINF and GSTP…NTQI.

The protein is Putative ankyrin repeat protein RF_0782 of Rickettsia felis (strain ATCC VR-1525 / URRWXCal2) (Rickettsia azadi).